The primary structure comprises 123 residues: Ribosome-binding factor A (123 aa).

The protein belongs to the RbfA family. Monomer. Binds 30S ribosomal subunits, but not 50S ribosomal subunits or 70S ribosomes.

It is found in the cytoplasm. One of several proteins that assist in the late maturation steps of the functional core of the 30S ribosomal subunit. Associates with free 30S ribosomal subunits (but not with 30S subunits that are part of 70S ribosomes or polysomes). Required for efficient processing of 16S rRNA. May interact with the 5'-terminal helix region of 16S rRNA. In Neisseria meningitidis serogroup A / serotype 4A (strain DSM 15465 / Z2491), this protein is Ribosome-binding factor A.